Reading from the N-terminus, the 198-residue chain is Recombination protein RecR (198 aa).

The C4-type zinc-finger motif lies at 57 to 72 (CSECQTLTDKDPCAVC). The Toprim domain occupies 80 to 175 (RIICVVEGVP…KVTRIAQGIP (96 aa)).

It belongs to the RecR family.

In terms of biological role, may play a role in DNA repair. It seems to be involved in an RecBC-independent recombinational process of DNA repair. It may act with RecF and RecO. This Anaeromyxobacter sp. (strain Fw109-5) protein is Recombination protein RecR.